A 90-amino-acid polypeptide reads, in one-letter code: Small ribosomal subunit protein bS16 (90 aa).

The protein belongs to the bacterial ribosomal protein bS16 family.

In Streptococcus thermophilus (strain CNRZ 1066), this protein is Small ribosomal subunit protein bS16.